Reading from the N-terminus, the 549-residue chain is Probable protein kinase UbiB (549 aa).

The 379-residue stretch at 123-501 (NFDDTPLASA…QQKAHKSNYL (379 aa)) folds into the Protein kinase domain. ATP is bound by residues 129–137 (LASASISQV) and K152. D287 acts as the Proton acceptor in catalysis. The next 2 helical transmembrane spans lie at 498–518 (SNYLLITSAVLVICGSILFSQ) and 520–540 (ATLWASYACIGIGATLWLLGW).

It belongs to the ABC1 family. UbiB subfamily.

It is found in the cell inner membrane. The protein operates within cofactor biosynthesis; ubiquinone biosynthesis [regulation]. Its function is as follows. Is probably a protein kinase regulator of UbiI activity which is involved in aerobic coenzyme Q (ubiquinone) biosynthesis. This Shewanella loihica (strain ATCC BAA-1088 / PV-4) protein is Probable protein kinase UbiB.